The sequence spans 184 residues: MLLNEKDFKNEGVKIAALIMAESARTAPKSKGEDTIEIVYVDGEEMEKIAAKMEEMAEGGDKDFIRDAESVRKSQAILLIGAKGDRTVGVNCQACGFESCSEFKKADRKGENFVGPNCAFRMIDLGIALGSAVKVSAMLGIDTRIMYRIGIAAKKLGMIDADVVMGVPLSALGKSPYFDRAPKK.

Residues 72-135 form the 4Fe-4S domain; it reads RKSQAILLIG…GIALGSAVKV (64 aa). C92, C95, C100, and C118 together coordinate [4Fe-4S] cluster.

The cofactor is [4Fe-4S] cluster.

This is an uncharacterized protein from Archaeoglobus fulgidus (strain ATCC 49558 / DSM 4304 / JCM 9628 / NBRC 100126 / VC-16).